Here is a 98-residue protein sequence, read N- to C-terminus: Carboxysome shell protein CsoS1C (98 aa).

Residues 8–93 form the BMC domain; it reads ALGMIETRGL…VHSEVENILP (86 aa).

The protein belongs to the bacterial microcompartments protein family. CsoS1 subfamily. Homohexamer with a small central pore. Interacts with the N-terminus (residues 1-136) of RuBisCO (CbbL).

Its subcellular location is the carboxysome. Functionally, one of shell proteins of the carboxysome, a polyhedral inclusion where RuBisCO (ribulose bisphosphate carboxylase, ccbL-ccbS) is sequestered. Assembles into hexamers which make sheets that form the facets of the polyhedral carboxysome. The shell probably limits the diffusion of CO(2) into and out of the carboxysome. There are estimated to be 2970 CsoS1A/CsoS1C proteins per carboxysome (the proteins differ by only 1 residue). Its function is as follows. Unlike beta-carboxysomes, alpha-carboxysomes (Cb) can form without cargo protein. CsoS2 is essential for Cb formation and is also capable of targeting foreign proteins to the Cb. The Cb shell assembles with the aid of CsoS2; CsoS1A, CsoS1B and CsoS1C form the majority of the shell while CsoS4A and CsoS4B form vertices. CsoS1D forms pseudohexamers that probably control metabolite flux into and out of the shell. The protein is Carboxysome shell protein CsoS1C of Halothiobacillus neapolitanus (strain ATCC 23641 / c2) (Thiobacillus neapolitanus).